The sequence spans 755 residues: Photosystem I P700 chlorophyll a apoprotein A1 (755 aa).

A run of 8 helical transmembrane segments spans residues 72–95 (IFSA…FHGA), 158–181 (LYCT…FHYH), 197–221 (LNHH…HVSL), 297–315 (TAHH…GHMY), 352–375 (WHAQ…QHMY), 391–417 (LSLF…IFMV), 439–461 (AIIS…LYVH), and 536–554 (FMVH…LILL). C578 and C587 together coordinate [4Fe-4S] cluster. Transmembrane regions (helical) follow at residues 594–615 (HVFL…HFSW) and 669–691 (LSAY…MFLF). Residue H680 coordinates chlorophyll a'. Residues M688 and Y696 each contribute to the chlorophyll a site. W697 is a phylloquinone binding site. The chain crosses the membrane as a helical span at residues 729-749 (AVGVAHYLLGGIATTWAFFLA).

This sequence belongs to the PsaA/PsaB family. As to quaternary structure, the PsaA/B heterodimer binds the P700 chlorophyll special pair and subsequent electron acceptors. PSI consists of a core antenna complex that captures photons, and an electron transfer chain that converts photonic excitation into a charge separation. The cyanobacterial PSI reaction center is composed of one copy each of PsaA,B,C,D,E,F,I,J,K,L,M and X, and forms trimeric complexes. PSI electron transfer chain: 5 chlorophyll a, 1 chlorophyll a', 2 phylloquinones and 3 4Fe-4S clusters. PSI core antenna: 90 chlorophyll a, 22 carotenoids, 3 phospholipids and 1 galactolipid. P700 is a chlorophyll a/chlorophyll a' dimer, A0 is one or more chlorophyll a, A1 is one or both phylloquinones and FX is a shared 4Fe-4S iron-sulfur center. serves as cofactor.

It is found in the cellular thylakoid membrane. The enzyme catalyses reduced [plastocyanin] + hnu + oxidized [2Fe-2S]-[ferredoxin] = oxidized [plastocyanin] + reduced [2Fe-2S]-[ferredoxin]. Functionally, psaA and PsaB bind P700, the primary electron donor of photosystem I (PSI), as well as the electron acceptors A0, A1 and FX. PSI is a plastocyanin/cytochrome c6-ferredoxin oxidoreductase, converting photonic excitation into a charge separation, which transfers an electron from the donor P700 chlorophyll pair to the spectroscopically characterized acceptors A0, A1, FX, FA and FB in turn. Oxidized P700 is reduced on the lumenal side of the thylakoid membrane by plastocyanin or cytochrome c6. In Thermostichus vulcanus (Synechococcus vulcanus), this protein is Photosystem I P700 chlorophyll a apoprotein A1.